The chain runs to 132 residues: Transmembrane protein C1orf162 homolog (132 aa).

A helical membrane pass occupies residues 36–56; sequence IILAFFAGVLLTLLIVALIFL. The tract at residues 95–132 is disordered; sequence TFKPPEENSNDLTRNHSSGLEPTIYSQIKVTDSDLPLP. A compositionally biased stretch (polar residues) spans 104–124; sequence NDLTRNHSSGLEPTIYSQIKV. S111 is modified (phosphoserine).

Its subcellular location is the membrane. This chain is Transmembrane protein C1orf162 homolog, found in Mus musculus (Mouse).